We begin with the raw amino-acid sequence, 449 residues long: Glucose-6-phosphate isomerase (449 aa).

The active-site Proton donor is the E291. Active-site residues include H312 and K426.

Belongs to the GPI family.

The protein localises to the cytoplasm. The catalysed reaction is alpha-D-glucose 6-phosphate = beta-D-fructose 6-phosphate. Its pathway is carbohydrate biosynthesis; gluconeogenesis. The protein operates within carbohydrate degradation; glycolysis; D-glyceraldehyde 3-phosphate and glycerone phosphate from D-glucose: step 2/4. Functionally, catalyzes the reversible isomerization of glucose-6-phosphate to fructose-6-phosphate. This chain is Glucose-6-phosphate isomerase, found in Streptococcus pneumoniae (strain ATCC BAA-255 / R6).